Consider the following 385-residue polypeptide: Rubredoxin-NAD(+) reductase (385 aa).

Residues Ala-8–Ala-11, Ser-32–Arg-33, Ile-79, Glu-156, Asp-275, and Ile-293 contribute to the FAD site.

This sequence belongs to the FAD-dependent oxidoreductase family. Homodimer. FAD is required as a cofactor.

It localises to the cytoplasm. The enzyme catalyses 2 reduced [rubredoxin] + NAD(+) + H(+) = 2 oxidized [rubredoxin] + NADH. The protein operates within hydrocarbon metabolism; alkane degradation. In terms of biological role, involved in the hydrocarbon hydroxylating system, which transfers electrons from NADH to rubredoxin reductase and then through rubredoxin to alkane 1 monooxygenase. This Pseudomonas putida (Arthrobacter siderocapsulatus) protein is Rubredoxin-NAD(+) reductase (alkT).